A 110-amino-acid chain; its full sequence is Large ribosomal subunit protein uL22 (110 aa).

This sequence belongs to the universal ribosomal protein uL22 family. Part of the 50S ribosomal subunit.

In terms of biological role, this protein binds specifically to 23S rRNA; its binding is stimulated by other ribosomal proteins, e.g. L4, L17, and L20. It is important during the early stages of 50S assembly. It makes multiple contacts with different domains of the 23S rRNA in the assembled 50S subunit and ribosome. The globular domain of the protein is located near the polypeptide exit tunnel on the outside of the subunit, while an extended beta-hairpin is found that lines the wall of the exit tunnel in the center of the 70S ribosome. This is Large ribosomal subunit protein uL22 from Pseudomonas aeruginosa (strain LESB58).